The primary structure comprises 210 residues: MEDLRDLSPRDLHKARGAKEEFKNVFLLADGELTVHASFSRIFTRRTNKMGTEYVAVLTGSFLTGAMMNLHLLTIPILIETTRQPAQLVHQWSRIFYSGHRKGPGIALVTGALYGYAAWAKYSVGEPWHHWMVAGVTTVSMVPYTWMFMNATNTALFHAEDQFEKGGVEISLQESVRLVGKWDWLNTVRALFPLAGSVMGMLGVCGVVRY.

A run of 4 helical transmembrane segments spans residues 59 to 79 (TGSF…PILI), 105 to 125 (GIAL…YSVG), 131 to 151 (WMVA…FMNA), and 188 to 208 (VRAL…CGVV).

The protein belongs to the anthrone oxygenase family.

The protein localises to the membrane. The enzyme catalyses noranthrone + O2 = norsolorinic acid + H2O. The protein operates within mycotoxin biosynthesis; aflatoxin biosynthesis. In terms of biological role, monooxygenase that converts norsolorinic acid anthrone to norsolorinic acid during aflatoxin biosynthesis. This Aspergillus flavus (strain ATCC 200026 / FGSC A1120 / IAM 13836 / NRRL 3357 / JCM 12722 / SRRC 167) protein is Noranthrone monooxygenase (hypC).